The following is an 828-amino-acid chain: Outer membrane usher protein PmfC (828 aa).

Residues 1–28 (MLIPYSPHTIWKTICATLLLSLAFFSQA) form the signal peptide.

It belongs to the fimbrial export usher family.

The protein localises to the cell outer membrane. Involved in the export and assembly of PMF fimbrial subunits across the outer membrane. The chain is Outer membrane usher protein PmfC (pmfC) from Proteus mirabilis (strain HI4320).